We begin with the raw amino-acid sequence, 236 residues long: 2-C-methyl-D-erythritol 4-phosphate cytidylyltransferase (236 aa).

Belongs to the IspD/TarI cytidylyltransferase family. IspD subfamily.

The catalysed reaction is 2-C-methyl-D-erythritol 4-phosphate + CTP + H(+) = 4-CDP-2-C-methyl-D-erythritol + diphosphate. Its pathway is isoprenoid biosynthesis; isopentenyl diphosphate biosynthesis via DXP pathway; isopentenyl diphosphate from 1-deoxy-D-xylulose 5-phosphate: step 2/6. In terms of biological role, catalyzes the formation of 4-diphosphocytidyl-2-C-methyl-D-erythritol from CTP and 2-C-methyl-D-erythritol 4-phosphate (MEP). In Burkholderia orbicola (strain AU 1054), this protein is 2-C-methyl-D-erythritol 4-phosphate cytidylyltransferase.